The sequence spans 141 residues: Nucleoside diphosphate kinase (141 aa).

ATP is bound by residues lysine 11, phenylalanine 59, arginine 87, threonine 93, arginine 104, and asparagine 114. Histidine 117 (pros-phosphohistidine intermediate) is an active-site residue.

This sequence belongs to the NDK family. As to quaternary structure, homotetramer. The cofactor is Mg(2+).

It is found in the cytoplasm. It carries out the reaction a 2'-deoxyribonucleoside 5'-diphosphate + ATP = a 2'-deoxyribonucleoside 5'-triphosphate + ADP. The catalysed reaction is a ribonucleoside 5'-diphosphate + ATP = a ribonucleoside 5'-triphosphate + ADP. Functionally, major role in the synthesis of nucleoside triphosphates other than ATP. The ATP gamma phosphate is transferred to the NDP beta phosphate via a ping-pong mechanism, using a phosphorylated active-site intermediate. The protein is Nucleoside diphosphate kinase of Legionella pneumophila (strain Paris).